A 396-amino-acid chain; its full sequence is 3-hydroxykynurenine transaminase (396 aa).

The binds to and confers specificity for 3-hydroxykynurenine; shared with dimeric partner stretch occupies residues 43–44 (SN). Pyridoxal 5'-phosphate-binding positions include 77 to 79 (SAH), S154, and Q204. S154 is a binding site for substrate. An N6-(pyridoxal phosphate)lysine modification is found at K205. Residues Y256 and T259 each coordinate pyridoxal 5'-phosphate. Residue R356 participates in substrate binding.

It belongs to the class-V pyridoxal-phosphate-dependent aminotransferase family. As to quaternary structure, homodimer. Requires pyridoxal 5'-phosphate as cofactor. As to expression, expressed in gut and ovaries.

The protein localises to the peroxisome. The catalysed reaction is L-kynurenine + glyoxylate = kynurenate + glycine + H2O. It catalyses the reaction 3-hydroxy-L-kynurenine + glyoxylate = xanthurenate + glycine + H2O. The enzyme catalyses 3-hydroxy-L-kynurenine + pyruvate = xanthurenate + L-alanine + H2O. It carries out the reaction glyoxylate + L-alanine = glycine + pyruvate. Its pathway is amino-acid degradation; L-kynurenine degradation; kynurenate from L-kynurenine: step 1/2. Functionally, catalyzes the pyridoxal 5'-phosphate-dependent transamination of both 3-hydroxykynurenine and L-kynurenine to xanthurenic acid and kynurenic acid, respectively, preferentially using the alpha-ketoacid glyoxylate as the amino group acceptor. Although glyoxylate is the preferred amino group acceptor, transamination of 3-hydroxykynurenine also works with pyruvate as the amino acceptor in vitro. Involved in the detoxification of cytotoxic metabolite 3-hydroxykynurenine generated by the hydroxylation of L-kynurenine, an intermediate in the tryptophan catabolism pathway. The Plasmodium parasite uses xanthurenic acid produced in the midgut to activate its gametocytes ingested during a blood meal. Also catalyzes, although with a lesser efficiency, the transamination of alanine with glyoxylate as an amino group acceptor. May play a role in the detoxification of glyoxylate, a toxic plant metabolite from the diet. In Anopheles gambiae (African malaria mosquito), this protein is 3-hydroxykynurenine transaminase.